Here is a 184-residue protein sequence, read N- to C-terminus: Adenine phosphoribosyltransferase (184 aa).

The protein belongs to the purine/pyrimidine phosphoribosyltransferase family. As to quaternary structure, homodimer.

It is found in the cytoplasm. It carries out the reaction AMP + diphosphate = 5-phospho-alpha-D-ribose 1-diphosphate + adenine. It functions in the pathway purine metabolism; AMP biosynthesis via salvage pathway; AMP from adenine: step 1/1. Catalyzes a salvage reaction resulting in the formation of AMP, that is energically less costly than de novo synthesis. The chain is Adenine phosphoribosyltransferase from Shewanella baltica (strain OS223).